The primary structure comprises 231 residues: ATP phosphoribosyltransferase (231 aa).

The protein belongs to the ATP phosphoribosyltransferase family. Short subfamily. In terms of assembly, heteromultimer composed of HisG and HisZ subunits.

It localises to the cytoplasm. The enzyme catalyses 1-(5-phospho-beta-D-ribosyl)-ATP + diphosphate = 5-phospho-alpha-D-ribose 1-diphosphate + ATP. The protein operates within amino-acid biosynthesis; L-histidine biosynthesis; L-histidine from 5-phospho-alpha-D-ribose 1-diphosphate: step 1/9. Functionally, catalyzes the condensation of ATP and 5-phosphoribose 1-diphosphate to form N'-(5'-phosphoribosyl)-ATP (PR-ATP). Has a crucial role in the pathway because the rate of histidine biosynthesis seems to be controlled primarily by regulation of HisG enzymatic activity. This Brucella suis (strain ATCC 23445 / NCTC 10510) protein is ATP phosphoribosyltransferase.